A 201-amino-acid chain; its full sequence is dTTP/UTP pyrophosphatase (201 aa).

Asp81 acts as the Proton acceptor in catalysis.

Belongs to the Maf family. YhdE subfamily. It depends on a divalent metal cation as a cofactor.

It is found in the cytoplasm. The enzyme catalyses dTTP + H2O = dTMP + diphosphate + H(+). The catalysed reaction is UTP + H2O = UMP + diphosphate + H(+). Its function is as follows. Nucleoside triphosphate pyrophosphatase that hydrolyzes dTTP and UTP. May have a dual role in cell division arrest and in preventing the incorporation of modified nucleotides into cellular nucleic acids. The chain is dTTP/UTP pyrophosphatase from Bordetella avium (strain 197N).